The following is a 550-amino-acid chain: MISDNVKKGVIRSPNRALLKACGYSDEDMEKPFIGVVNSFTEVVPGHIHLKTLSEAVKHGVYANGGTPFEFNTIGICDGIAMGHEGMKYSLPSREIIADAVESMARAHGFDGLVLIPTCDKIVPGMIMGALRLNIPFIVVTGGPMLPGEFQGKKCELISLFEGVGEYQVGKITEEELKSIEECACPGAGSCAGLYTANSMACLTEALGLSLPMCATIHAVDAQKVRIAKKTGSKIVDLVKEDVKPTDILTKEAFENAILVDLALGGSTNTTLHIPAIANEIENKFITLDDFDRLSNEVPHIASIKPGGEHYMIDLHNAGGIPAVLNVLKGKIRDTKTVDGRSTLEIAESVKYINYDVIRKVEAPVHETAGLRVLKGNLAPNGCVVKIGAVNPKMYKHDGPAKVYNSEDEAISAILGGKIVEGDVIVIRYEGPSGGPGMREMLSPTSAICGMGLDDSVALITDGRFSGGSRGPCIGHVSPEAAAGGVIAAIENGDIIKIDMIGKEINVDLDESVIKERLSKLDEFEPKIKKGYLSRYSRLVSSADEGAVLK.

Aspartate 78 provides a ligand contact to Mg(2+). Cysteine 119 lines the [2Fe-2S] cluster pocket. Residues aspartate 120 and lysine 121 each coordinate Mg(2+). Residue lysine 121 is modified to N6-carboxylysine. Cysteine 191 is a [2Fe-2S] cluster binding site. Residue glutamate 440 participates in Mg(2+) binding. Serine 466 functions as the Proton acceptor in the catalytic mechanism.

Belongs to the IlvD/Edd family. Homodimer. [2Fe-2S] cluster serves as cofactor. Mg(2+) is required as a cofactor.

It carries out the reaction (2R)-2,3-dihydroxy-3-methylbutanoate = 3-methyl-2-oxobutanoate + H2O. The catalysed reaction is (2R,3R)-2,3-dihydroxy-3-methylpentanoate = (S)-3-methyl-2-oxopentanoate + H2O. Its pathway is amino-acid biosynthesis; L-isoleucine biosynthesis; L-isoleucine from 2-oxobutanoate: step 3/4. It participates in amino-acid biosynthesis; L-valine biosynthesis; L-valine from pyruvate: step 3/4. Its function is as follows. Functions in the biosynthesis of branched-chain amino acids. Catalyzes the dehydration of (2R,3R)-2,3-dihydroxy-3-methylpentanoate (2,3-dihydroxy-3-methylvalerate) into 2-oxo-3-methylpentanoate (2-oxo-3-methylvalerate) and of (2R)-2,3-dihydroxy-3-methylbutanoate (2,3-dihydroxyisovalerate) into 2-oxo-3-methylbutanoate (2-oxoisovalerate), the penultimate precursor to L-isoleucine and L-valine, respectively. This chain is Dihydroxy-acid dehydratase, found in Methanococcus maripaludis (strain C7 / ATCC BAA-1331).